The sequence spans 585 residues: Archaeosine synthase (585 aa).

Positions 516–584 constitute a PUA domain; it reads TKTVEIDGFV…IGVEIRHVEE (69 aa).

Belongs to the archaeosine synthase type 1 family. Homodimer.

The catalysed reaction is 7-cyano-7-carbaguanosine(15) in tRNA + L-glutamine + H2O = archaeosine(15) in tRNA + L-glutamate. It participates in tRNA modification; archaeosine-tRNA biosynthesis. Functionally, is responsible for the final step in the biosynthesis of archaeosine, a modified nucleoside present in the dihydrouridine loop (D-loop) of archaeal tRNA. Catalyzes the conversion of 7-cyano-7-deazaguanine (preQ0)-modified tRNA to archaeosine-tRNA, transforming a nitrile group to a formamidine group. The sequence is that of Archaeosine synthase from Haloferax volcanii (strain ATCC 29605 / DSM 3757 / JCM 8879 / NBRC 14742 / NCIMB 2012 / VKM B-1768 / DS2) (Halobacterium volcanii).